A 247-amino-acid chain; its full sequence is MKMRAVAVFTGMLTGVLSVAGLLSAGAYAAGGEGNMSASATETNARVFSLHLGATRVVYNPASSGETLTVINDQDYPMLVQSEVLSEDQKSPAPFVVTPPLFRLDGQQSSRLRIVRTGGEFPPDRESLQWICVKGIPPKEGDRWAEGKDGEKKADKVSLNVQLSVSSCIKLFVRPPAVKGRPDDVAGKVEWQRAGNRLKGVNPTPFYINLSTLTVGGKEVKEREYIAPFSSREYPLPAGHRVRFSGR.

A signal peptide spans Met-1 to Ala-29.

Belongs to the periplasmic pilus chaperone family.

The protein localises to the periplasm. In terms of biological role, involved in the biogenesis of the AFA-III afimbrial adhesin. This is Chaperone protein AfaB (afaB) from Escherichia coli.